The sequence spans 242 residues: Megakaryocyte and platelet inhibitory receptor G6b (242 aa).

The signal sequence occupies residues 1 to 17; that stretch reads MALVLPLLPLLLSKVQG. 2 N-linked (GlcNAc...) asparagine glycosylation sites follow: N32 and N112. Residues 141-161 form a helical membrane-spanning segment; the sequence is VLIPLLGVGLVLGLGVAGVVW. 2 short sequence motifs (ITIM motif) span residues 210–215 and 236–241; these read LHYADL and TVYAVV. Phosphotyrosine is present on Y212.

Interacts (via ITIM motif) with PTPN6 and PTPN11. Binds to heparin. In terms of processing, N-glycosylated. Post-translationally, may be O-glycosylated. Phosphorylated. Expressed in mature megakaryocytes and platelets. Not expressed by immature megakaryocytes.

Its subcellular location is the cell membrane. Functionally, inhibitory receptor that acts as a critical regulator of hematopoietic lineage differentiation, megakaryocyte function and platelet production. Inhibits platelet aggregation and activation by agonists such as ADP and collagen-related peptide. This regulation of megakaryocate function as well as platelet production ann activation is done through the inhibition (via the 2 ITIM motifs) of the receptors CLEC1B and GP6:FcRgamma signaling. Appears to operate in a calcium-independent manner. This is Megakaryocyte and platelet inhibitory receptor G6b from Mus musculus (Mouse).